Reading from the N-terminus, the 371-residue chain is Sensor histidine kinase YvfT (371 aa).

Residues 1–10 (MKKAISIFPK) lie on the Extracellular side of the membrane. A helical membrane pass occupies residues 11 to 31 (EFGFFPYIFLVYTIMPFLSLL). The Cytoplasmic portion of the chain corresponds to 32–38 (KESGVKQ). Residues 39–59 (GIGYGMLLLFVAAYRQLFCSV) form a helical membrane-spanning segment. Over 60-71 (GKASFTYWLIVQ) the chain is Extracellular. Residues 72 to 92 (MAVILMYSVFYNITYIYLGFF) traverse the membrane as a helical segment. Topologically, residues 93 to 109 (PANFVGYYKEKTNFNRA) are cytoplasmic. Residues 110–130 (FCALIFILLFPCLYQFIANSV) form a helical membrane-spanning segment. Over 131-135 (SLREL) the chain is Extracellular. A helical transmembrane segment spans residues 136–156 (FSVLPFLVIMLISPFGIRSMF). Topologically, residues 157–371 (RRIELEAKLA…LTIPLIKKAE (215 aa)) are cytoplasmic. The region spanning 187–368 (DLHDTLGHTL…VVALTIPLIK (182 aa)) is the Histidine kinase domain. H189 carries the phosphohistidine; by autocatalysis modification.

Its subcellular location is the cell membrane. The catalysed reaction is ATP + protein L-histidine = ADP + protein N-phospho-L-histidine.. Member of the two-component regulatory system YvfT/YvfU. Probably activates YvfU by phosphorylation. The polypeptide is Sensor histidine kinase YvfT (yvfT) (Bacillus subtilis (strain 168)).